A 145-amino-acid polypeptide reads, in one-letter code: Ribosome maturation factor RimP (145 aa).

The protein belongs to the RimP family.

Its subcellular location is the cytoplasm. Required for maturation of 30S ribosomal subunits. This is Ribosome maturation factor RimP from Borreliella burgdorferi (strain ZS7) (Borrelia burgdorferi).